Consider the following 360-residue polypeptide: 3-dehydroquinate synthase (360 aa).

Residues 106–110 (GVIGD), 130–131 (TS), Lys143, and Lys152 each bind NAD(+). Residues Glu185, His246, and His262 each coordinate Zn(2+).

It belongs to the sugar phosphate cyclases superfamily. Dehydroquinate synthase family. The cofactor is Co(2+). It depends on Zn(2+) as a cofactor. NAD(+) is required as a cofactor.

It localises to the cytoplasm. The enzyme catalyses 7-phospho-2-dehydro-3-deoxy-D-arabino-heptonate = 3-dehydroquinate + phosphate. It functions in the pathway metabolic intermediate biosynthesis; chorismate biosynthesis; chorismate from D-erythrose 4-phosphate and phosphoenolpyruvate: step 2/7. Its function is as follows. Catalyzes the conversion of 3-deoxy-D-arabino-heptulosonate 7-phosphate (DAHP) to dehydroquinate (DHQ). The polypeptide is 3-dehydroquinate synthase (Leuconostoc citreum (strain KM20)).